The primary structure comprises 229 residues: MRFLTVDVGNSSVDIALWEGKKVKDFLKLSHEEFLKEEFPKLKALGISVKQSFSEKVRGKIPKIKFLKKENFPIQVDYKTPETLGTDRVALAYSAKKFYGKNVVVISAGTALVIDLVLEGKFKGGFITLGLGKKLKILSDLAEGIPEFFPEEVEIFLGRSTRECVLGGAYRESTEFIKSTLKLWRKVFKRKFKVVITGGEGKYFSKFGIYDPLLVHRGMRNLLYLYHRI.

7–14 (DVGNSSVD) is a binding site for ATP. Substrate is bound by residues Y78 and 85–88 (GTDR). D87 (proton acceptor) is an active-site residue. T110 contacts ATP. Residue T161 participates in substrate binding.

The protein belongs to the type III pantothenate kinase family. As to quaternary structure, homodimer. Requires NH4(+) as cofactor. It depends on K(+) as a cofactor.

It localises to the cytoplasm. The enzyme catalyses (R)-pantothenate + ATP = (R)-4'-phosphopantothenate + ADP + H(+). The protein operates within cofactor biosynthesis; coenzyme A biosynthesis; CoA from (R)-pantothenate: step 1/5. Functionally, catalyzes the phosphorylation of pantothenate (Pan), the first step in CoA biosynthesis. This chain is Type III pantothenate kinase, found in Aquifex aeolicus (strain VF5).